Here is a 376-residue protein sequence, read N- to C-terminus: Glucose-1-phosphate adenylyltransferase (376 aa).

Alpha-D-glucose 1-phosphate contacts are provided by residues Tyr101, Gly166, 181–182, and Ser192; that span reads EK.

This sequence belongs to the bacterial/plant glucose-1-phosphate adenylyltransferase family. As to quaternary structure, homotetramer.

The enzyme catalyses alpha-D-glucose 1-phosphate + ATP + H(+) = ADP-alpha-D-glucose + diphosphate. It participates in glycan biosynthesis; glycogen biosynthesis. Involved in the biosynthesis of ADP-glucose, a building block required for the elongation reactions to produce glycogen. Catalyzes the reaction between ATP and alpha-D-glucose 1-phosphate (G1P) to produce pyrophosphate and ADP-Glc. The polypeptide is Glucose-1-phosphate adenylyltransferase (Bacillus cytotoxicus (strain DSM 22905 / CIP 110041 / 391-98 / NVH 391-98)).